A 563-amino-acid polypeptide reads, in one-letter code: Arginine--tRNA ligase (563 aa).

Residues 121 to 131 (PNIAKPFSIGH) carry the 'HIGH' region motif.

This sequence belongs to the class-I aminoacyl-tRNA synthetase family. Monomer.

The protein resides in the cytoplasm. It catalyses the reaction tRNA(Arg) + L-arginine + ATP = L-arginyl-tRNA(Arg) + AMP + diphosphate. This is Arginine--tRNA ligase from Streptococcus thermophilus (strain CNRZ 1066).